The chain runs to 444 residues: Phosphoglucosamine mutase (444 aa).

S102 acts as the Phosphoserine intermediate in catalysis. Mg(2+) is bound by residues S102, D241, D243, and D245. S102 carries the post-translational modification Phosphoserine.

Belongs to the phosphohexose mutase family. Mg(2+) is required as a cofactor. Activated by phosphorylation.

It carries out the reaction alpha-D-glucosamine 1-phosphate = D-glucosamine 6-phosphate. Its function is as follows. Catalyzes the conversion of glucosamine-6-phosphate to glucosamine-1-phosphate. This chain is Phosphoglucosamine mutase, found in Actinobacillus succinogenes (strain ATCC 55618 / DSM 22257 / CCUG 43843 / 130Z).